Reading from the N-terminus, the 530-residue chain is Histone-arginine methyltransferase CARMER (530 aa).

One can recognise an SAM-dependent MTase PRMT-type domain in the interval 141–450; that stretch reads ASQYFQFYGY…QSYDVTIDLH (310 aa). S-adenosyl-L-methionine is bound by residues glutamine 154, arginine 163, glycine 187, glutamate 209, glutamate 238, and threonine 266. Arginine 501 is modified (asymmetric dimethylarginine; by autocatalysis).

Belongs to the class I-like SAM-binding methyltransferase superfamily. Protein arginine N-methyltransferase family. Homodimer. In terms of processing, the dimethylated protein is the major form.

It is found in the cytoplasm. Its subcellular location is the nucleus. It catalyses the reaction L-arginyl-[protein] + 2 S-adenosyl-L-methionine = N(omega),N(omega)-dimethyl-L-arginyl-[protein] + 2 S-adenosyl-L-homocysteine + 2 H(+). Functionally, methylates (mono- and asymmetric dimethylation) the guanidino nitrogens of arginyl residues in proteins. May methylate histone H3 at 'Arg-17' and activate transcription via chromatin remodeling. In Drosophila yakuba (Fruit fly), this protein is Histone-arginine methyltransferase CARMER (Art4).